Here is a 450-residue protein sequence, read N- to C-terminus: Calcium-binding and coiled-coil domain-containing protein 2 (450 aa).

A CLIR motif is present at residues 133-136 (ILVV). The stretch at 135–349 (VVTTQSEVEE…RENNRLLSYM (215 aa)) forms a coiled coil. The LIR-like motif lies at 203 to 206 (DCWE). Positions 371 to 381 (DPGLVFGNPYS) are interaction with LGALS8. Residues 395 to 450 (KKCPTCKSDFAADVFDHNLALEQHLQTLSLNCPICDKTFPAKEKQIFEDHVFCHTL) form an interaction with MYO6 region. The segment at 423 to 448 (SLNCPICDKTFPAKEKQIFEDHVFCH) adopts a UBZ1-type zinc-finger fold. Zn(2+) is bound by residues cysteine 426, cysteine 429, histidine 444, and histidine 448.

The protein belongs to the CALCOCO family. As to quaternary structure, dimer. Part of a complex consisting of CALCOCO2, TAX1BP1 and MYO6. Interacts with GEMIN4. Interacts with ATG8 family members MAP1LC3A, MAP1LC3B, GABARAP, GABARAPL1 and GABARAPL2. Interacts with ATG8 family member MAP1LC3C. Interacts with LGALS8. Interacts with TOM1; the interaction is indirect and is mediated by MYO6, which acts as a bridge between TOM1 and CALCOCO2. Interacts with AZI2.

Its subcellular location is the cytoplasm. The protein localises to the perinuclear region. It localises to the cytoskeleton. It is found in the cytoplasmic vesicle. The protein resides in the autophagosome membrane. Functionally, xenophagy-specific receptor required for autophagy-mediated intracellular bacteria degradation. Acts as an effector protein of galectin-sensed membrane damage that restricts the proliferation of infecting pathogens upon entry into the cytosol by targeting LGALS8-associated bacteria for autophagy. Initially orchestrates bacteria targeting to autophagosomes and subsequently ensures pathogen degradation by regulating pathogen-containing autophagosome maturation. Bacteria targeting to autophagosomes relies on its interaction with MAP1LC3A, MAP1LC3B and/or GABARAPL2, whereas regulation of pathogen-containing autophagosome maturation requires the interaction with MAP3LC3C. May play a role in ruffle formation and actin cytoskeleton organization and seems to negatively regulate constitutive secretion. The polypeptide is Calcium-binding and coiled-coil domain-containing protein 2 (Bos taurus (Bovine)).